A 353-amino-acid polypeptide reads, in one-letter code: Photosystem II D2 protein (353 aa).

An N-acetylthreonine modification is found at Thr-2. Residue Thr-2 is modified to Phosphothreonine. A helical transmembrane segment spans residues 41-61; sequence CAYFALGGWFTGTTFVTSWYT. Residue His-118 participates in chlorophyll a binding. The helical transmembrane segment at 125–141 threads the bilayer; sequence GFMLRQFELSRSVQLRP. Pheophytin a is bound by residues Gln-130 and Asn-143. Residues 153-166 form a helical membrane-spanning segment; sequence VFVSVFLIYPLGQS. His-198 contacts chlorophyll a. The chain crosses the membrane as a helical span at residues 208–228; sequence AALLCAIHGATVENTLFEDGD. A plastoquinone-binding residues include His-215 and Phe-262. Fe cation is bound at residue His-215. Residue His-269 participates in Fe cation binding. Residues 279-295 traverse the membrane as a helical segment; that stretch reads GLWMSALGVVGLALNLR.

It belongs to the reaction center PufL/M/PsbA/D family. As to quaternary structure, PSII is composed of 1 copy each of membrane proteins PsbA, PsbB, PsbC, PsbD, PsbE, PsbF, PsbH, PsbI, PsbJ, PsbK, PsbL, PsbM, PsbT, PsbX, PsbY, PsbZ, Psb30/Ycf12, at least 3 peripheral proteins of the oxygen-evolving complex and a large number of cofactors. It forms dimeric complexes. Requires The D1/D2 heterodimer binds P680, chlorophylls that are the primary electron donor of PSII, and subsequent electron acceptors. It shares a non-heme iron and each subunit binds pheophytin, quinone, additional chlorophylls, carotenoids and lipids. There is also a Cl(-1) ion associated with D1 and D2, which is required for oxygen evolution. The PSII complex binds additional chlorophylls, carotenoids and specific lipids. as cofactor.

It is found in the plastid. The protein localises to the chloroplast thylakoid membrane. It carries out the reaction 2 a plastoquinone + 4 hnu + 2 H2O = 2 a plastoquinol + O2. Its function is as follows. Photosystem II (PSII) is a light-driven water:plastoquinone oxidoreductase that uses light energy to abstract electrons from H(2)O, generating O(2) and a proton gradient subsequently used for ATP formation. It consists of a core antenna complex that captures photons, and an electron transfer chain that converts photonic excitation into a charge separation. The D1/D2 (PsbA/PsbD) reaction center heterodimer binds P680, the primary electron donor of PSII as well as several subsequent electron acceptors. D2 is needed for assembly of a stable PSII complex. In Arabis hirsuta (Hairy rock-cress), this protein is Photosystem II D2 protein.